The following is an 884-amino-acid chain: Alanine--tRNA ligase (884 aa).

Zn(2+) is bound by residues H572, H576, C673, and H677.

It belongs to the class-II aminoacyl-tRNA synthetase family. Zn(2+) serves as cofactor.

Its subcellular location is the cytoplasm. The catalysed reaction is tRNA(Ala) + L-alanine + ATP = L-alanyl-tRNA(Ala) + AMP + diphosphate. Functionally, catalyzes the attachment of alanine to tRNA(Ala) in a two-step reaction: alanine is first activated by ATP to form Ala-AMP and then transferred to the acceptor end of tRNA(Ala). Also edits incorrectly charged Ser-tRNA(Ala) and Gly-tRNA(Ala) via its editing domain. This is Alanine--tRNA ligase from Xylella fastidiosa (strain M23).